Here is a 220-residue protein sequence, read N- to C-terminus: NADH-quinone oxidoreductase subunit I (220 aa).

4Fe-4S ferredoxin-type domains lie at 71 to 102 (LQRLLDSGSERCIGCGLCEKICTSNCIRIITH) and 112 to 141 (DSYTINLGRCIYCGLCAEVCPELAIVMGNR). 8 residues coordinate [4Fe-4S] cluster: Cys-82, Cys-85, Cys-88, Cys-92, Cys-121, Cys-124, Cys-127, and Cys-131. The interval 187 to 220 (MQATPLDYVQEPSKEESKEETPTNPESNKGDENV) is disordered. Positions 198–207 (PSKEESKEET) are enriched in basic and acidic residues.

It belongs to the complex I 23 kDa subunit family. NDH-1 is composed of 14 different subunits. Subunits NuoA, H, J, K, L, M, N constitute the membrane sector of the complex. Requires [4Fe-4S] cluster as cofactor.

The protein resides in the cell inner membrane. The catalysed reaction is a quinone + NADH + 5 H(+)(in) = a quinol + NAD(+) + 4 H(+)(out). NDH-1 shuttles electrons from NADH, via FMN and iron-sulfur (Fe-S) centers, to quinones in the respiratory chain. The immediate electron acceptor for the enzyme in this species is believed to be ubiquinone. Couples the redox reaction to proton translocation (for every two electrons transferred, four hydrogen ions are translocated across the cytoplasmic membrane), and thus conserves the redox energy in a proton gradient. This chain is NADH-quinone oxidoreductase subunit I, found in Helicobacter pylori (strain HPAG1).